A 484-amino-acid chain; its full sequence is Transcription factor cghD (484 aa).

A DNA-binding region (zn(2)-C6 fungal-type) is located at residues 21–54; that stretch reads CDRCRLQKLKCTVQSMESDGRMVCERCVRAKVPC. 4 disordered regions span residues 59–117, 136–174, 202–242, and 386–406; these read RRRA…PTLA, TTAPTYSYHHHHHDSYQLGEGPPTPFPNPATTGGGSGSS, PAST…FSTT, and HMHSTPAPTTSPTLQLGELPS. Residues 64 to 76 show a composition bias toward basic and acidic residues; sequence RPSDTKKQGDSST. A compositionally biased stretch (low complexity) spans 77–107; the sequence is RRSTAPRTTNPEPTVLTPPLSTTSSTSEQTL. A compositionally biased stretch (low complexity) spans 202–213; the sequence is PASTSTSTGSPT.

The protein localises to the nucleus. Its function is as follows. Transcription factor that regulates the expression of the gene cluster that mediates the biosynthesis of the tetramic acid Sch210972, a potential anti-HIV fungal natural product that contains a decalin core. The polypeptide is Transcription factor cghD (Chaetomium globosum (strain ATCC 6205 / CBS 148.51 / DSM 1962 / NBRC 6347 / NRRL 1970) (Soil fungus)).